A 527-amino-acid chain; its full sequence is Arginine--tRNA ligase (527 aa).

Residues 111-121 (ANPTGPLHIGH) carry the 'HIGH' region motif.

This sequence belongs to the class-I aminoacyl-tRNA synthetase family. As to quaternary structure, monomer.

The protein localises to the cytoplasm. It catalyses the reaction tRNA(Arg) + L-arginine + ATP = L-arginyl-tRNA(Arg) + AMP + diphosphate. The chain is Arginine--tRNA ligase from Campylobacter concisus (strain 13826).